A 2473-amino-acid polypeptide reads, in one-letter code: Neurogenic locus notch homolog protein 2 (2473 aa).

A signal peptide spans 1-25; sequence MPALRPAALRALLWLWLCGAGPAHA. 4 EGF-like domains span residues 26-63, 64-102, 105-143, and 144-180; these read LQCR…EYCQ, HRDP…EDCQ, TSHP…KQCQ, and WTDA…QKCE. The Extracellular segment spans residues 26-1679; it reads LQCRGGQEPC…SELESPRNAQ (1654 aa). Cystine bridges form between C28-C41, C35-C51, C53-C62, C68-C79, C73-C90, C92-C101, C109-C121, C115-C131, C133-C142, C148-C159, C153-C168, C170-C179, C186-C198, C192-C207, C209-C218, C230-C246, C248-C257, C264-C275, C269-C284, C286-C295, C302-C315, C309-C324, C326-C335, C342-C353, C347-C362, C364-C373, C379-C390, C384-C401, C403-C412, C419-C433, C427-C442, C444-C453, C460-C471, C465-C480, C482-C491, C498-C509, C503-C518, C520-C529, C536-C547, C541-C556, C558-C567, C574-C584, C579-C593, C595-C604, C611-C622, C616-C631, C633-C642, C649-C659, C654-C668, C670-C679, C686-C697, C691-C706, C708-C717, C724-C734, C729-C743, C745-C754, C761-C772, C766-C781, C783-C792, C799-C810, C804-C819, C821-C830, C837-C848, C842-C859, C861-C870, C877-C888, C882-C897, C899-C908, C915-C926, C920-C935, C937-C946, C953-C964, C958-C973, C975-C984, C991-C1002, C996-C1011, C1013-C1022, C1029-C1040, C1034-C1049, C1051-C1060, C1067-C1078, C1072-C1087, and C1089-C1098. Residue N46 is glycosylated (N-linked (GlcNAc...) asparagine). Residue N155 is glycosylated (N-linked (GlcNAc...) asparagine). The region spanning 182-219 is the EGF-like 5; calcium-binding domain; it reads DINECDIPGRCQHGGTCLNLPGSYRCQCPQGFTGQHCD. In terms of domain architecture, EGF-like 6; incomplete spans 221-258; sequence PYVPCAPSPCVNGGTCRQTGDFTFECNCLPGFEGSTCE. The region spanning 260-296 is the EGF-like 7; calcium-binding domain; sequence NIDDCPNHKCQNGGVCVDGVNTYNCRCPPQWTGQFCT. One can recognise an EGF-like 8; calcium-binding domain in the interval 298 to 336; it reads DVDECLLQPNACQNGGTCTNRNGGYGCVCVNGWSGDDCS. Residues 338–374 enclose the EGF-like 9; calcium-binding domain; that stretch reads NIDDCAYASCTPGSTCIDRVASFSCLCPEGKAGLLCH. In terms of domain architecture, EGF-like 10 spans 375-413; that stretch reads LDDACISNPCHKGALCDTNPLNGQYICTCPQGYKGADCT. Positions 415-454 constitute an EGF-like 11; calcium-binding domain; the sequence is DVDECAMANSNPCEHAGKCVNTDGAFHCECLKGYAGPRCE. One can recognise an EGF-like 12; calcium-binding domain in the interval 456–492; that stretch reads DINECHSDPCQNDATCLDKIGGFTCLCMPGFKGVHCE. One can recognise an EGF-like 13; calcium-binding domain in the interval 494-530; it reads EVNECQSNPCVNNGQCVDKVNRFQCLCPPGFTGPVCQ. Residues 532-568 enclose the EGF-like 14; calcium-binding domain; sequence DIDDCSSTPCLNGAKCIDHPNGYECQCATGFTGILCD. Residues 570 to 605 form the EGF-like 15; calcium-binding domain; sequence NIDNCDPDPCHHGQCQDGIDSYTCICNPGYMGAICS. The region spanning 607–643 is the EGF-like 16; calcium-binding domain; the sequence is QIDECYSSPCLNDGRCIDLVNGYQCNCQPGTSGLNCE. S613 is a glycosylation site (O-linked (Glc...) serine; alternate). An O-linked (Xyl...) serine; alternate glycan is attached at S613. One can recognise an EGF-like 17; calcium-binding domain in the interval 645–680; the sequence is NFDDCASNPCMHGVCVDGINRYSCVCSPGFTGQRCN. In terms of domain architecture, EGF-like 18; calcium-binding spans 682–718; that stretch reads DIDECASNPCRKGATCINDVNGFRCICPEGPHHPSCY. One can recognise an EGF-like 19 domain in the interval 720–755; sequence QVNECLSNPCIHGNCTGGLSGYKCLCDAGWVGVNCE. An N-linked (GlcNAc...) asparagine glycan is attached at N733. In terms of domain architecture, EGF-like 20; calcium-binding spans 757–793; the sequence is DKNECLSNPCQNGGTCNNLVNGYRCTCKKGFKGYNCQ. Positions 795-831 constitute an EGF-like 21; calcium-binding domain; the sequence is NIDECASNPCLNQGTCFDDVSGYTCHCMLPYTGKNCQ. The EGF-like 22 domain occupies 833–871; that stretch reads VLAPCSPNPCENAAVCKEAPNFESFSCLCAPGWQGKRCT. The region spanning 873–909 is the EGF-like 23; calcium-binding domain; sequence DVDECISKPCMNNGVCHNTQGSYVCECPPGFSGMDCE. Residues 911–947 enclose the EGF-like 24; calcium-binding domain; the sequence is DINDCLANPCQNGGSCVDHVNTFSCQCHPGFIGDKCQ. Positions 949 to 985 constitute an EGF-like 25; calcium-binding domain; it reads DMNECLSEPCKNGGTCSDYVNSYTCTCPAGFHGVHCE. The 37-residue stretch at 987–1023 folds into the EGF-like 26; calcium-binding domain; the sequence is NIDECTESSCFNGGTCVDGINSFSCLCPVGFTGPFCL. One can recognise an EGF-like 27; calcium-binding domain in the interval 1025–1061; that stretch reads DINECSSNPCLNAGTCVDGLGTYRCICPLGYTGKNCQ. EGF-like domains lie at 1063–1099 and 1101–1147; these read LVNL…AYCD and LNVS…SYCE. Residue N1102 is glycosylated (N-linked (GlcNAc...) asparagine). 24 disulfide bridges follow: C1105–C1126, C1120–C1135, C1137–C1146, C1153–C1164, C1158–C1173, C1175–C1184, C1191–C1202, C1196–C1211, C1213–C1222, C1229–C1241, C1235–C1250, C1252–C1261, C1268–C1281, C1273–C1290, C1292–C1301, C1308–C1319, C1313–C1331, C1333–C1346, C1378–C1389, C1383–C1400, C1402–C1411, C1425–C1448, C1430–C1443, and C1439–C1455. One can recognise an EGF-like 30; calcium-binding domain in the interval 1149–1185; that stretch reads QLDECASNPCQHGATCNDFIGGYRCECVPGYQGVNCE. Positions 1187-1223 constitute an EGF-like 31; calcium-binding domain; it reads EVDECQNQPCQNGGTCIDLVNHFKCSCPPGTRGLLCE. The EGF-like 32; calcium-binding domain occupies 1225-1262; the sequence is NIDECAGGPHCLNGGQCVDRIGGYTCRCLPGFAGERCE. 3 EGF-like domains span residues 1264-1302, 1304-1343, and 1375-1412; these read DINE…RHCE, FLDV…ARCQ, and ESGC…SHCE. 3 LNR repeats span residues 1425 to 1465, 1466 to 1502, and 1503 to 1544; these read CQSQ…PWAN, CTST…NSKT, and CKYD…NLAE. Residues 1425–1679 form a negative regulatory region (NRR) region; it reads CQSQYCADKA…SELESPRNAQ (255 aa). The N-linked (GlcNAc...) asparagine glycan is linked to N1465. Intrachain disulfides connect C1466–C1489, C1472–C1484, C1480–C1496, C1503–C1527, C1509–C1522, C1518–C1534, and C1634–C1641. A helical transmembrane segment spans residues 1680-1700; sequence LLYLLAVAVVIILFFILLGVI. The Cytoplasmic segment spans residues 1701–2473; the sequence is MAKRKRKHGF…PPHSNMQVYA (773 aa). T1718 is subject to Phosphothreonine. A disordered region spans residues 1755–1778; it reads GTSEHWVDDEGPQPKKAKAEDEAL. A Phosphoserine modification is found at S1780. A Phosphothreonine modification is found at T1803. At S1805 the chain carries Phosphoserine. T1809 is modified (phosphothreonine). ANK repeat units follow at residues 1828–1872, 1877–1906, 1910–1940, 1944–1973, 1977–2006, and 2010–2039; these read DGCT…SLQA, TGEM…DANA, MGRC…DLDA, DGTT…DVNA, HGKS…NRDM, and KEET…NRDI. Phosphoserine occurs at positions 1843 and 1846. Phosphoserine occurs at positions 2071, 2079, and 2082. At T2098 the chain carries Phosphothreonine. Disordered regions lie at residues 2098–2117, 2122–2169, and 2382–2473; these read TPMG…PTSL, KEAK…TSSP, and VGKY…QVYA. Residues 2099–2108 show a composition bias toward basic residues; that stretch reads PMGKKARRPN. Composition is skewed to polar residues over residues 2140 to 2151 and 2390 to 2400; these read VQLSESSVTLSP and SQHSYASSNAA. A compositionally biased stretch (low complexity) spans 2419 to 2446; sequence PSPESPDQWSSSSPHSASDWSDVTTSPT. The segment covering 2447–2456 has biased composition (gly residues); that stretch reads PGGGGGGQRG.

It belongs to the NOTCH family. As to quaternary structure, heterodimer of a C-terminal fragment N(TM) and an N-terminal fragment N(EC) which are probably linked by disulfide bonds. Interacts with MAML1, MAML2 and MAML3 which act as transcriptional coactivators for NOTCH2. Interacts with RELA/p65. Interacts with HIF1AN. Interacts (via ANK repeats) with TCIM, the interaction inhibits the nuclear translocation of NOTCH2 N2ICD. Interacts with CUL1, RBX1, SKP1 and FBXW7 that are SCF(FBXW7) E3 ubiquitin-protein ligase complex components. Interacts with MINAR1; this interaction increases MINAR1 stability and function. Interacts with MDK; this interaction mediates a nuclear accumulation of NOTCH2 and therefore activation of NOTCH2 signaling leading to interaction between HES1 and STAT3. Interacts with MINAR2. Post-translationally, synthesized in the endoplasmic reticulum as an inactive form which is proteolytically cleaved by a furin-like convertase in the trans-Golgi network before it reaches the plasma membrane to yield an active, ligand-accessible form. Cleavage results in a C-terminal fragment N(TM) and a N-terminal fragment N(EC). Following ligand binding, it is cleaved by TNF-alpha converting enzyme (TACE) to yield a membrane-associated intermediate fragment called notch extracellular truncation (NEXT). This fragment is then cleaved by presenilin dependent gamma-secretase to release a notch-derived peptide containing the intracellular domain (NICD) from the membrane. Hydroxylated by HIF1AN. In terms of processing, can be either O-glucosylated or O-xylosylated at Ser-613 by POGLUT1. Post-translationally, phosphorylated by GSK3. GSK3-mediated phosphorylation is necessary for NOTCH2 recognition by FBXW7, ubiquitination and degradation via the ubiquitin proteasome pathway. In terms of tissue distribution, expressed in the brain, liver, kidney, neuroepithelia, somites, optic vesicles and branchial arches, but not heart.

It localises to the cell membrane. Its subcellular location is the nucleus. The protein localises to the cytoplasm. Functions as a receptor for membrane-bound ligands Jagged-1 (JAG1), Jagged-2 (JAG2) and Delta-1 (DLL1) to regulate cell-fate determination. Upon ligand activation through the released notch intracellular domain (NICD) it forms a transcriptional activator complex with RBPJ/RBPSUH and activates genes of the enhancer of split locus. Affects the implementation of differentiation, proliferation and apoptotic programs. May play an essential role in postimplantation development, probably in some aspect of cell specification and/or differentiation. In collaboration with RELA/p65 enhances NFATc1 promoter activity and positively regulates RANKL-induced osteoclast differentiation. Positively regulates self-renewal of liver cancer cells. This Mus musculus (Mouse) protein is Neurogenic locus notch homolog protein 2.